The chain runs to 511 residues: Ribose import ATP-binding protein RbsA (511 aa).

ABC transporter domains follow at residues 7–242 and 256–500; these read LQIS…VGRE and CSTT…SGTQ. 39–46 lines the ATP pocket; it reads GENGAGKS.

This sequence belongs to the ABC transporter superfamily. Ribose importer (TC 3.A.1.2.1) family. As to quaternary structure, the complex is composed of an ATP-binding protein (RbsA), two transmembrane proteins (RbsC) and a solute-binding protein (RbsB).

The protein resides in the cell inner membrane. The catalysed reaction is D-ribose(out) + ATP + H2O = D-ribose(in) + ADP + phosphate + H(+). Functionally, part of the ABC transporter complex RbsABC involved in ribose import. Responsible for energy coupling to the transport system. The protein is Ribose import ATP-binding protein RbsA of Ruegeria sp. (strain TM1040) (Silicibacter sp.).